A 316-amino-acid polypeptide reads, in one-letter code: GPI-specific phospholipase A2-like PGAP3 (316 aa).

The signal sequence occupies residues 1–19; that stretch reads MFLAAAAFLLSAPASASQG. Residues 20-97 are Lumenal-facing; that stretch reads DKEPVYRDCV…GKWPFARFLC (78 aa). Residue N36 is glycosylated (N-linked (GlcNAc...) asparagine). The helical transmembrane segment at 98-118 threads the bilayer; it reads FEEPASALASLLNGLACLLML. The Cytoplasmic segment spans residues 119–131; it reads LRYRSAVPCQSPM. Residues 132–152 form a helical membrane-spanning segment; it reads YHTITAFSLVSLNAWFWSTVF. Residues 153-165 are Lumenal-facing; sequence HTRDTYLTEKMDY. A helical transmembrane segment spans residues 166 to 186; sequence FCASAVILYSIYLCCVRTLGL. At 187–194 the chain is on the cytoplasmic side; it reads RRPAISSM. Residues 195-215 traverse the membrane as a helical segment; that stretch reads VGVLLILAFTSHVSYLTFVSF. At 216–220 the chain is on the lumenal side; that stretch reads DYGYN. Residues 221–241 traverse the membrane as a helical segment; the sequence is MAANASIGIINLLWWLCWCWL. The Cytoplasmic segment spans residues 242-254; that stretch reads NRRILPYWWRCGM. Residues 255-275 traverse the membrane as a helical segment; the sequence is VVLLLHGLALLELLDFPPLFW. Topologically, residues 276-278 are lumenal; sequence VLD. The chain crosses the membrane as a helical span at residues 279 to 299; the sequence is AHAVWHLSTVPVHFLFYSFLI. The Cytoplasmic portion of the chain corresponds to 300–316; sequence DDSLHLLNTEKPGVKLD.

Belongs to the PGAP3 family.

The protein resides in the golgi apparatus membrane. Functionally, involved in the fatty acid remodeling steps of GPI-anchor maturation where the unsaturated acyl chain at sn-2 of inositol phosphate is replaced by a saturated stearoyl chain. May catalyze the first step of the fatty acid remodeling, by removing the unsaturated acyl chain at sn-2 of inositol phosphate, generating a lyso-GPI intermediate. The fatty acid remodeling steps is critical for the integration of GPI-APs into lipid rafts. The polypeptide is GPI-specific phospholipase A2-like PGAP3 (Danio rerio (Zebrafish)).